Consider the following 401-residue polypeptide: Canavanine gamma-lyase (401 aa).

K214 carries the post-translational modification N6-(pyridoxal phosphate)lysine.

This sequence belongs to the trans-sulfuration enzymes family. It depends on pyridoxal 5'-phosphate as a cofactor.

It carries out the reaction L-canavanine + H2O = N-hydroxyguanidine + L-homoserine. Its function is as follows. Lyase involved in the degradation of canavanine, the delta-oxa-analog of arginine, allowing growth on canavanine as sole nitrogen and carbon source. Catalyzes the elimination of hydroxyguanidine from canavanine with a subsequent water addition to yield homoserine. In Rhizobium leguminosarum bv. trifolii (strain WSM2304), this protein is Canavanine gamma-lyase.